A 446-amino-acid polypeptide reads, in one-letter code: tRNA modification GTPase MnmE (446 aa).

(6S)-5-formyl-5,6,7,8-tetrahydrofolate-binding residues include Arg22, Glu80, and Lys119. The TrmE-type G domain maps to 215 to 370 (GLSLVIAGRP…LKKVIKQVVG (156 aa)). Asn225 contributes to the K(+) binding site. GTP contacts are provided by residues 225–230 (NAGKST), 244–250 (TEIAGTT), and 269–272 (DTAG). Position 229 (Ser229) interacts with Mg(2+). K(+)-binding residues include Thr244, Ile246, and Thr249. Residue Thr250 participates in Mg(2+) binding. Position 446 (Lys446) interacts with (6S)-5-formyl-5,6,7,8-tetrahydrofolate.

It belongs to the TRAFAC class TrmE-Era-EngA-EngB-Septin-like GTPase superfamily. TrmE GTPase family. As to quaternary structure, homodimer. Heterotetramer of two MnmE and two MnmG subunits. The cofactor is K(+).

The protein resides in the cytoplasm. Exhibits a very high intrinsic GTPase hydrolysis rate. Involved in the addition of a carboxymethylaminomethyl (cmnm) group at the wobble position (U34) of certain tRNAs, forming tRNA-cmnm(5)s(2)U34. The sequence is that of tRNA modification GTPase MnmE from Legionella pneumophila subsp. pneumophila (strain Philadelphia 1 / ATCC 33152 / DSM 7513).